Reading from the N-terminus, the 423-residue chain is Glycine amidinotransferase, mitochondrial (423 aa).

The N-terminal 43 residues, 1 to 43 (MLRVRCLRGGSRGAEAVHYIGSRLGRTLTGWVQRTFQSTQAAT), are a transit peptide targeting the mitochondrion. Ser46 and Ser49 each carry phosphoserine. Asp170 provides a ligand contact to arginine. Catalysis depends on residues Asp254 and His303. Arginine contacts are provided by Asp305, Arg322, Ser354, and Ser355. N6-acetyllysine is present on Lys385. Cys407 acts as the Amidino-cysteine intermediate in catalysis.

The protein belongs to the amidinotransferase family. In terms of assembly, homodimer. There is an equilibrium between the monomeric and dimeric forms, shifted towards the side of the monomer. Expressed in brain, heart, kidney, liver, lung, salivary gland and skeletal muscle tissue, with the highest expression in kidney. Biallelically expressed in placenta and fetal tissues.

It is found in the mitochondrion inner membrane. The protein localises to the cytoplasm. It carries out the reaction L-arginine + glycine = guanidinoacetate + L-ornithine. The enzyme catalyses 4-aminobutanoate + L-arginine = 4-guanidinobutanoate + L-ornithine. The catalysed reaction is beta-alanine + L-arginine = 3-guanidinopropanoate + L-ornithine. It catalyses the reaction taurine + L-arginine = taurocyamine + L-ornithine. It participates in amine and polyamine biosynthesis; creatine biosynthesis; creatine from L-arginine and glycine: step 1/2. Functionally, transamidinase that catalyzes the transfer of the amidino group of L-arginine onto the amino moiety of acceptor metabolites such as glycine, beta-alanine, gamma-aminobutyric acid (GABA) and taurine yielding the corresponding guanidine derivatives. Catalyzes the rate-limiting step of creatine biosynthesis, namely the transfer of the amidino group from L-arginine to glycine to generate guanidinoacetate, which is then methylated by GAMT to form creatine. Provides creatine as a source for ATP generation in tissues with high energy demands, in particular skeletal muscle, heart and brain. The polypeptide is Glycine amidinotransferase, mitochondrial (GATM) (Homo sapiens (Human)).